The following is a 225-amino-acid chain: Agamous-like MADS-box protein MADS1 (225 aa).

In terms of tissue distribution, expressed in flowers and seeds.

It is found in the nucleus. In terms of biological role, probable transcription factor involved in flower development. This chain is Agamous-like MADS-box protein MADS1, found in Vitis vinifera (Grape).